A 242-amino-acid polypeptide reads, in one-letter code: Probable 2-phosphosulfolactate phosphatase (242 aa).

It belongs to the ComB family. Mg(2+) is required as a cofactor.

The enzyme catalyses (2R)-O-phospho-3-sulfolactate + H2O = (2R)-3-sulfolactate + phosphate. The sequence is that of Probable 2-phosphosulfolactate phosphatase from Parasynechococcus marenigrum (strain WH8102).